The primary structure comprises 422 residues: Cytokine receptor-like factor 1 (422 aa).

A signal peptide spans 1–37 (MPAGRRGPAAQSARRPPPLLPLLLLLCVLGAPRAGSG). An Ig-like C2-type domain is found at 38-131 (AHTAVISPQD…SILAGSCLYV (94 aa)). 3 N-linked (GlcNAc...) asparagine glycosylation sites follow: N92, N104, and N140. 2 Fibronectin type-III domains span residues 137-232 (KPVN…ILDV) and 237-341 (PPPD…TPRS). The cysteines at positions 143 and 153 are disulfide-linked. N-linked (GlcNAc...) asparagine glycosylation is present at N168. C184 and C195 are oxidised to a cystine. Residue S219 is modified to Phosphoserine. N292 is a glycosylation site (N-linked (GlcNAc...) asparagine). Residues 327-331 (WSEWS) carry the WSXWS motif motif. A disordered region spans residues 332–363 (HPTAASTPRSERPGPGGGACEPRGGEPSSGPV). N382 carries N-linked (GlcNAc...) asparagine glycosylation. The interval 399 to 422 (HKTRNQDEGILPSGRRGTARGPAR) is disordered.

The protein belongs to the type I cytokine receptor family. Type 3 subfamily. In terms of assembly, forms covalent di- and tetramers. Forms a heteromeric complex with cardiotrophin-like cytokine CLCF1/CLC; the CRLF1-CLCF1 complex is a ligand for the ciliary neurotrophic factor receptor/CNTFR. The CRLF1-CLCF1 heterodimer binds SORL1 (via N-terminal ectodomain); within this complex, the interaction is mediated predominantly by the CRLF1 moiety. The tripartite signaling complex formed by CRLF1, CLCF1 and CNTFR also binds SORL1. In terms of tissue distribution, highest levels of expression observed in spleen, thymus, lymph node, appendix, bone marrow, stomach, placenta, heart, thyroid and ovary. Strongly expressed also in fetal lung.

Its subcellular location is the secreted. In complex with CLCF1, forms a heterodimeric neurotropic cytokine that plays a crucial role during neuronal development. May also play a regulatory role in the immune system. The sequence is that of Cytokine receptor-like factor 1 (CRLF1) from Homo sapiens (Human).